A 349-amino-acid chain; its full sequence is tRNA pseudouridine synthase D (349 aa).

Phenylalanine 27 lines the substrate pocket. Aspartate 80 acts as the Nucleophile in catalysis. Asparagine 129 lines the substrate pocket. In terms of domain architecture, TRUD spans 155-303 (GVPNYFGAQR…VEAARRAMLL (149 aa)). Position 329 (phenylalanine 329) interacts with substrate.

Belongs to the pseudouridine synthase TruD family.

It carries out the reaction uridine(13) in tRNA = pseudouridine(13) in tRNA. In terms of biological role, responsible for synthesis of pseudouridine from uracil-13 in transfer RNAs. In Escherichia coli O9:H4 (strain HS), this protein is tRNA pseudouridine synthase D.